A 72-amino-acid chain; its full sequence is UPF0495 protein KLLA0D04334g (72 aa).

A helical transmembrane segment spans residues 20–42 (PVELTPLFLAMGVALASGTWFSY).

It belongs to the UPF0495 family.

The protein resides in the membrane. This Kluyveromyces lactis (strain ATCC 8585 / CBS 2359 / DSM 70799 / NBRC 1267 / NRRL Y-1140 / WM37) (Yeast) protein is UPF0495 protein KLLA0D04334g.